Here is a 328-residue protein sequence, read N- to C-terminus: GTPase Obg 2 (328 aa).

The region spanning 1–139 is the Obg domain; the sequence is MSFRREKFIE…HCVLLKLKIV (139 aa). Residues 140–309 form the OBG-type G domain; it reads SDVGIIGMPN…LHAQVKKAVV (170 aa). GTP is bound by residues 146-153, 171-175, 192-195, 259-262, and 290-292; these read GMPNAGKS, FTTLE, DIPG, NKCD, and GDE. Positions 153 and 173 each coordinate Mg(2+).

The protein belongs to the TRAFAC class OBG-HflX-like GTPase superfamily. OBG GTPase family. As to quaternary structure, monomer. Requires Mg(2+) as cofactor.

The protein localises to the cytoplasm. An essential GTPase which binds GTP, GDP and possibly (p)ppGpp with moderate affinity, with high nucleotide exchange rates and a fairly low GTP hydrolysis rate. Plays a role in control of the cell cycle, stress response, ribosome biogenesis and in those bacteria that undergo differentiation, in morphogenesis control. This is GTPase Obg 2 from Anaplasma marginale (strain Florida).